We begin with the raw amino-acid sequence, 959 residues long: Glycine dehydrogenase (decarboxylating) (959 aa).

Position 708 is an N6-(pyridoxal phosphate)lysine (lysine 708).

It belongs to the GcvP family. The glycine cleavage system is composed of four proteins: P, T, L and H. Pyridoxal 5'-phosphate serves as cofactor.

The catalysed reaction is N(6)-[(R)-lipoyl]-L-lysyl-[glycine-cleavage complex H protein] + glycine + H(+) = N(6)-[(R)-S(8)-aminomethyldihydrolipoyl]-L-lysyl-[glycine-cleavage complex H protein] + CO2. Its function is as follows. The glycine cleavage system catalyzes the degradation of glycine. The P protein binds the alpha-amino group of glycine through its pyridoxal phosphate cofactor; CO(2) is released and the remaining methylamine moiety is then transferred to the lipoamide cofactor of the H protein. This is Glycine dehydrogenase (decarboxylating) from Yersinia pseudotuberculosis serotype O:1b (strain IP 31758).